Reading from the N-terminus, the 571-residue chain is MRTSQYLLATQKETPADAVVISHQLMLRAGMIRKLASGLYTWLPMGLRVMRKVEAVVREEMNAAGALEVLMPSIQPAELWQESGRWEQYGPELLRLKDRHDRDFCVGPTHEEVITDLARNELSSYKQLPLNMYQIQTKFRDEIRPRFGLMRGREFIMKDAYSFHADQASLQETYDRMHQAYSNIFTRLGLDFRPVQADTGSIGGSYSHEFHVLASSGEDDVIFSDSSDYAANIEKAEAIPRETVRPAPTEELRLVDTPNAKTIAELVENFGLAIEKTVKTLIVHGAEEGKLVALIVRGDHELNEIKAAKLEQVADPLVMASDTELRAAIGAGAGSLGPLNLPLECIIDRSVALMSDFGIGANIDDKHYFGVNWERDLPVPQVADLRNVVEGDPSPDGQGTLVIKRGIEVGHIFQLGTKYSEALKCQVLGENGKPVVLSMGCYGIGVSRVVAAAIEQSYDDKGIIWNDALAPFQIALVPLRYETDVVREATDKLYAELTAAGFEVLLDDRDKKTSPGIKFADMELIGIPHRIVVSDRGLADGNLEYKHRTESEAQALPLNEVLTFLQARIRR.

The protein belongs to the class-II aminoacyl-tRNA synthetase family. ProS type 1 subfamily. In terms of assembly, homodimer.

Its subcellular location is the cytoplasm. It catalyses the reaction tRNA(Pro) + L-proline + ATP = L-prolyl-tRNA(Pro) + AMP + diphosphate. Its function is as follows. Catalyzes the attachment of proline to tRNA(Pro) in a two-step reaction: proline is first activated by ATP to form Pro-AMP and then transferred to the acceptor end of tRNA(Pro). As ProRS can inadvertently accommodate and process non-cognate amino acids such as alanine and cysteine, to avoid such errors it has two additional distinct editing activities against alanine. One activity is designated as 'pretransfer' editing and involves the tRNA(Pro)-independent hydrolysis of activated Ala-AMP. The other activity is designated 'posttransfer' editing and involves deacylation of mischarged Ala-tRNA(Pro). The misacylated Cys-tRNA(Pro) is not edited by ProRS. The sequence is that of Proline--tRNA ligase from Pseudomonas entomophila (strain L48).